We begin with the raw amino-acid sequence, 427 residues long: Trigger factor (427 aa).

Residues 163–248 enclose the PPIase FKBP-type domain; the sequence is GDIAVIDFKG…IKSIKVKELP (86 aa).

This sequence belongs to the FKBP-type PPIase family. Tig subfamily.

It is found in the cytoplasm. It catalyses the reaction [protein]-peptidylproline (omega=180) = [protein]-peptidylproline (omega=0). In terms of biological role, involved in protein export. Acts as a chaperone by maintaining the newly synthesized protein in an open conformation. Functions as a peptidyl-prolyl cis-trans isomerase. This is Trigger factor from Clostridium beijerinckii (strain ATCC 51743 / NCIMB 8052) (Clostridium acetobutylicum).